The sequence spans 384 residues: 1-deoxy-D-xylulose 5-phosphate reductoisomerase (384 aa).

Residues Thr10, Gly11, Ser12, Ile13, Gly36, Lys37, Asn38, and Asn121 each contribute to the NADPH site. Lys122 provides a ligand contact to 1-deoxy-D-xylulose 5-phosphate. Glu123 lines the NADPH pocket. Asp147 provides a ligand contact to Mn(2+). 4 residues coordinate 1-deoxy-D-xylulose 5-phosphate: Ser148, Glu149, Ser173, and His196. Glu149 provides a ligand contact to Mn(2+). Position 202 (Gly202) interacts with NADPH. 1-deoxy-D-xylulose 5-phosphate is bound by residues Ser209, Asn214, Lys215, and Glu218. Residue Glu218 participates in Mn(2+) binding.

This sequence belongs to the DXR family. Mg(2+) serves as cofactor. The cofactor is Mn(2+).

It catalyses the reaction 2-C-methyl-D-erythritol 4-phosphate + NADP(+) = 1-deoxy-D-xylulose 5-phosphate + NADPH + H(+). It participates in isoprenoid biosynthesis; isopentenyl diphosphate biosynthesis via DXP pathway; isopentenyl diphosphate from 1-deoxy-D-xylulose 5-phosphate: step 1/6. In terms of biological role, catalyzes the NADPH-dependent rearrangement and reduction of 1-deoxy-D-xylulose-5-phosphate (DXP) to 2-C-methyl-D-erythritol 4-phosphate (MEP). This chain is 1-deoxy-D-xylulose 5-phosphate reductoisomerase, found in Exiguobacterium sibiricum (strain DSM 17290 / CCUG 55495 / CIP 109462 / JCM 13490 / 255-15).